The primary structure comprises 471 residues: 7-dehydrocholesterol reductase (471 aa).

The tract at residues 1–23 (MASKSQHNAPKVKSPNGKAGSQG) is disordered. At serine 14 the chain carries Phosphoserine. 8 helical membrane-spanning segments follow: residues 36–56 (LASI…FIMA), 95–115 (LYAL…DFCH), 144–164 (LQAW…LSWF), 173–193 (WIPL…FAMI), 233–253 (LFFN…SFAA), 262–282 (VTNS…DFFW), 302–322 (LGWG…LYLV), and 327–347 (QLST…YYIF). NADP(+) is bound by residues lysine 354, arginine 358, leucine 391, tryptophan 396, and 403 to 404 (NY). A helical transmembrane segment spans residues 416 to 436 (LACGGGHLLPYFYIIYMTILL). NADP(+) is bound by residues aspartate 443, 447-451 (CANKY), and tyrosine 458.

This sequence belongs to the ERG4/ERG24 family. As to quaternary structure, interacts with DHCR24; this interaction regulates DHCR7 activity. Interacts with TMEM147.

Its subcellular location is the endoplasmic reticulum membrane. It catalyses the reaction cholesterol + NADP(+) = 7-dehydrocholesterol + NADPH + H(+). The catalysed reaction is 7-dehydrodesmosterol + NADPH + H(+) = desmosterol + NADP(+). It carries out the reaction 5,6alpha-epoxy-5alpha-cholestan-3beta-ol + H2O = 5alpha-cholestane-3beta,5,6beta-triol. The enzyme catalyses 5,6beta-epoxy-5beta-cholestan-3beta-ol + H2O = 5alpha-cholestane-3beta,5,6beta-triol. The protein operates within steroid biosynthesis; cholesterol biosynthesis. Oxidoreductase that catalyzes the last step of the cholesterol synthesis pathway, which transforms cholesta-5,7-dien-3beta-ol (7-dehydrocholesterol,7-DHC) into cholesterol by reducing the C7-C8 double bond of its sterol core. Can also metabolize cholesta-5,7,24-trien-3beta-ol (7-dehydrodemosterol, 7-DHD) to desmosterol, which is then metabolized by the Delta(24)-sterol reductase (DHCR24) to cholesterol. Modulates ferroptosis (a form of regulated cell death driven by iron-dependent lipid peroxidation) through the metabolic breakdown of the anti-ferroptotic metabolites 7-DHC and 7-DHD which, when accumulated, divert the propagation of peroxyl radical-mediated damage from phospholipid components to its sterol core, protecting plasma and mitochondrial membranes from phospholipid autoxidation. Functionally, component of the microsomal antiestrogen binding site (AEBS), a multiproteic complex at the ER membrane that consists of an association between cholestenol Delta-isomerase/EBP and DHCR7. This complex is responsible for cholesterol-5,6-epoxide hydrolase (ChEH) activity, which consists in the hydration of cholesterol-5,6-epoxides (5,6-EC) into cholestane-3beta,5alpha,6beta-triol (CT). The precise role of each component of this complex has not been described yet. The chain is 7-dehydrocholesterol reductase (Dhcr7) from Mus musculus (Mouse).